Here is a 95-residue protein sequence, read N- to C-terminus: Protein TusB (95 aa).

Belongs to the DsrH/TusB family. In terms of assembly, heterohexamer, formed by a dimer of trimers. The hexameric TusBCD complex contains 2 copies each of TusB, TusC and TusD. The TusBCD complex interacts with TusE.

The protein localises to the cytoplasm. In terms of biological role, part of a sulfur-relay system required for 2-thiolation of 5-methylaminomethyl-2-thiouridine (mnm(5)s(2)U) at tRNA wobble positions. In Escherichia coli O139:H28 (strain E24377A / ETEC), this protein is Protein TusB.